The chain runs to 201 residues: Holliday junction branch migration complex subunit RuvA (201 aa).

The domain I stretch occupies residues 1–63 (MIAYLSGVVR…EDAQLLFGFP (63 aa)). The segment at 64–142 (DADHLKLFDL…EHLAAAASGA (79 aa)) is domain II. The interval 143–150 (AGGKRPAR) is flexible linker. Residues 151–201 (VSSTAGHDAVDALLALGFREAQVRAAVAELLGADPEASADTLIRKALGRLR) form a domain III region.

The protein belongs to the RuvA family. Homotetramer. Forms an RuvA(8)-RuvB(12)-Holliday junction (HJ) complex. HJ DNA is sandwiched between 2 RuvA tetramers; dsDNA enters through RuvA and exits via RuvB. An RuvB hexamer assembles on each DNA strand where it exits the tetramer. Each RuvB hexamer is contacted by two RuvA subunits (via domain III) on 2 adjacent RuvB subunits; this complex drives branch migration. In the full resolvosome a probable DNA-RuvA(4)-RuvB(12)-RuvC(2) complex forms which resolves the HJ.

Its subcellular location is the cytoplasm. Its function is as follows. The RuvA-RuvB-RuvC complex processes Holliday junction (HJ) DNA during genetic recombination and DNA repair, while the RuvA-RuvB complex plays an important role in the rescue of blocked DNA replication forks via replication fork reversal (RFR). RuvA specifically binds to HJ cruciform DNA, conferring on it an open structure. The RuvB hexamer acts as an ATP-dependent pump, pulling dsDNA into and through the RuvAB complex. HJ branch migration allows RuvC to scan DNA until it finds its consensus sequence, where it cleaves and resolves the cruciform DNA. This Deinococcus radiodurans (strain ATCC 13939 / DSM 20539 / JCM 16871 / CCUG 27074 / LMG 4051 / NBRC 15346 / NCIMB 9279 / VKM B-1422 / R1) protein is Holliday junction branch migration complex subunit RuvA.